A 495-amino-acid chain; its full sequence is DNA double-strand break repair helicase HerA (495 aa).

ATP-binding positions include arginine 142, 151-156 (GSGKSN), and 459-460 (KI).

The protein belongs to the HerA family. Interacts with Rad50 and Mre11.

It carries out the reaction Couples ATP hydrolysis with the unwinding of duplex DNA at the replication fork by translocating in the 5'-3' direction. This creates two antiparallel DNA single strands (ssDNA). The leading ssDNA polymer is the template for DNA polymerase III holoenzyme which synthesizes a continuous strand.. It catalyses the reaction ATP + H2O = ADP + phosphate + H(+). The enzyme catalyses Couples ATP hydrolysis with the unwinding of duplex DNA by translocating in the 3'-5' direction.. Its activity is regulated as follows. ATPase activity is slightly stimulated by either circular single- or double-stranded (ds)DNA with a weak preference for dsDNA. Functionally, involved in DNA double-strand break (DSB) repair. Probably acts with NurA to stimulate resection of the 5' strand and produce the long 3' single-strand that is required for RadA loading. Has DNA-dependent ATPase activity and bidirectional DNA helicase activity. Loads on either a 3' or a 5' DNA tail for subsequent DNA unwinding; has no activity on blunt-end DNA. The polypeptide is DNA double-strand break repair helicase HerA (Sulfolobus acidocaldarius (strain ATCC 33909 / DSM 639 / JCM 8929 / NBRC 15157 / NCIMB 11770)).